A 675-amino-acid chain; its full sequence is G-protein coupled receptor moody (675 aa).

The Extracellular segment spans residues 1-44 (MSDETTGSLGDAFSPMDTPTTTIMPPPADVDESGFSHSLLTFAA). Residues 45-65 (VMTFLIMIVGICGNLLTVVAL) traverse the membrane as a helical segment. At 66-73 (LKCPKVRN) the chain is on the cytoplasmic side. A helical membrane pass occupies residues 74-94 (VAAAFIISLCIADLLFCALVL). Over 95–115 (PFQGLRFVQGTWRHGEVLCRL) the chain is Extracellular. Cys-113 and Cys-192 are disulfide-bonded. A helical transmembrane segment spans residues 116–136 (IPFIQYGNIGVSLLCIAMITI). The Cytoplasmic segment spans residues 137 to 156 (NRYVMITHYSLYNRIYKRHW). The helical transmembrane segment at 157–177 (IAIMIAACWLFSYGMQLPTLL) threads the bilayer. The Extracellular portion of the chain corresponds to 178 to 206 (GAWGRFGYDARLQTCSIMSDRHGHSSKTT). The helical transmembrane segment at 207 to 227 (LFITAFVIPCLVIIACYAKIF) threads the bilayer. The Cytoplasmic segment spans residues 228–327 (WVVHKSEQRL…AKRNEWRITK (100 aa)). A disordered region spans residues 258–316 (TSMPSGDGANPSQVPAGCRVSSDSSSNYSTDVPDTTPGGAGGGAGVKQQPSRVKDQREV). The segment covering 278-294 (SSDSSSNYSTDVPDTTP) has biased composition (low complexity). The helical transmembrane segment at 328–348 (MVLAIFLSFVICYLPITIVKV) threads the bilayer. Over 349-359 (ADKDVEHPSLH) the chain is Extracellular. A helical membrane pass occupies residues 360–380 (IFSYIMLYLSACINPIIYVIM). The Cytoplasmic segment spans residues 381–675 (NKQYRKAYKT…LMDKKKFPKD (295 aa)). Disordered regions lie at residues 475–568 (SKSS…GNGS) and 588–675 (LPPT…FPKD). Low complexity predominate over residues 536 to 551 (SSVISANPSSSPSPSS). Residues 552–565 (SGGGIYRPGIGSMG) show a composition bias toward gly residues. A compositionally biased stretch (basic and acidic residues) spans 666–675 (LMDKKKFPKD).

Belongs to the G-protein coupled receptor 1 family.

Its subcellular location is the cell membrane. Required in glia to regulate the acute sensitivity to cocaine and to continuously maintain the proper blood-brain barrier (BBB) function. A moody-mediated signaling pathway functions in glia to regulate nervous system insulation and drug-related behaviors. The polypeptide is G-protein coupled receptor moody (Drosophila pseudoobscura pseudoobscura (Fruit fly)).